Consider the following 90-residue polypeptide: Putative membrane protein insertion efficiency factor (90 aa).

It belongs to the UPF0161 family.

It is found in the cell inner membrane. Could be involved in insertion of integral membrane proteins into the membrane. In Thermosynechococcus vestitus (strain NIES-2133 / IAM M-273 / BP-1), this protein is Putative membrane protein insertion efficiency factor.